Consider the following 113-residue polypeptide: Putative anti-sigma factor antagonist TM_1081 (113 aa).

The STAS domain maps to 1–110; that stretch reads MFPYKIVDDV…DTISEAMEEV (110 aa). S55 carries the phosphoserine modification.

It belongs to the anti-sigma-factor antagonist family. In terms of processing, phosphorylated on a serine residue.

Functionally, in the phosphorylated form it could act as an anti-anti-sigma factor that counteracts an anti-sigma factor and thus releases a sigma factor from inhibition. This chain is Putative anti-sigma factor antagonist TM_1081, found in Thermotoga maritima (strain ATCC 43589 / DSM 3109 / JCM 10099 / NBRC 100826 / MSB8).